A 140-amino-acid chain; its full sequence is Glycine cleavage system H protein (140 aa).

The region spanning 22 to 104 (EVVIGITRFA…YGKGWMLRLK (83 aa)) is the Lipoyl-binding domain. Residue Lys-63 is modified to N6-lipoyllysine.

The protein belongs to the GcvH family. In terms of assembly, the glycine cleavage system is composed of four proteins: P, T, L and H. (R)-lipoate serves as cofactor.

Functionally, the glycine cleavage system catalyzes the degradation of glycine. The H protein shuttles the methylamine group of glycine from the P protein to the T protein. This Magnetococcus marinus (strain ATCC BAA-1437 / JCM 17883 / MC-1) protein is Glycine cleavage system H protein.